Reading from the N-terminus, the 201-residue chain is Holliday junction branch migration complex subunit RuvA (201 aa).

Residues 1–64 (MIGRLRGTLA…EDAQLLYGFA (64 aa)) are domain I. The tract at residues 65–143 (EKRERELFRE…AWESMPAIAT (79 aa)) is domain II. Residues 144 to 152 (LVVEPGSKT) are flexible linker. Residues 153 to 201 (AVTSAENDAVSALISLGFKPQEASRAVSAIQEENLSSEEMIRRALKGMV) form a domain III region.

Belongs to the RuvA family. In terms of assembly, homotetramer. Forms an RuvA(8)-RuvB(12)-Holliday junction (HJ) complex. HJ DNA is sandwiched between 2 RuvA tetramers; dsDNA enters through RuvA and exits via RuvB. An RuvB hexamer assembles on each DNA strand where it exits the tetramer. Each RuvB hexamer is contacted by two RuvA subunits (via domain III) on 2 adjacent RuvB subunits; this complex drives branch migration. In the full resolvosome a probable DNA-RuvA(4)-RuvB(12)-RuvC(2) complex forms which resolves the HJ.

Its subcellular location is the cytoplasm. Its function is as follows. The RuvA-RuvB-RuvC complex processes Holliday junction (HJ) DNA during genetic recombination and DNA repair, while the RuvA-RuvB complex plays an important role in the rescue of blocked DNA replication forks via replication fork reversal (RFR). RuvA specifically binds to HJ cruciform DNA, conferring on it an open structure. The RuvB hexamer acts as an ATP-dependent pump, pulling dsDNA into and through the RuvAB complex. HJ branch migration allows RuvC to scan DNA until it finds its consensus sequence, where it cleaves and resolves the cruciform DNA. The chain is Holliday junction branch migration complex subunit RuvA from Stutzerimonas stutzeri (strain A1501) (Pseudomonas stutzeri).